Consider the following 518-residue polypeptide: uncharacterized protein (518 aa).

It is found in the virion. This is an uncharacterized protein from Acanthamoeba polyphaga (Amoeba).